The primary structure comprises 273 residues: 2-dehydro-3-deoxyphosphooctonate aldolase (273 aa).

It belongs to the KdsA family.

The protein localises to the cytoplasm. The enzyme catalyses D-arabinose 5-phosphate + phosphoenolpyruvate + H2O = 3-deoxy-alpha-D-manno-2-octulosonate-8-phosphate + phosphate. It participates in carbohydrate biosynthesis; 3-deoxy-D-manno-octulosonate biosynthesis; 3-deoxy-D-manno-octulosonate from D-ribulose 5-phosphate: step 2/3. It functions in the pathway bacterial outer membrane biogenesis; lipopolysaccharide biosynthesis. This is 2-dehydro-3-deoxyphosphooctonate aldolase from Nitratidesulfovibrio vulgaris (strain DP4) (Desulfovibrio vulgaris).